The sequence spans 506 residues: tRNA (guanine(6)-N(2))-methyltransferase THUMP3 (506 aa).

The segment at Lys144–Val172 is disordered. Residues Gln157–Val172 show a composition bias toward basic and acidic residues. Residues Lys170–Leu286 enclose the THUMP domain.

Belongs to the methyltransferase superfamily. In terms of assembly, part of the heterodimeric THUMPD3-TRM112 methyltransferase complex; this complex forms an active tRNA methyltransferase, where TRMT112 acts as an activator of the catalytic subunit THUMPD3.

It localises to the cytoplasm. It catalyses the reaction guanosine(6) in tRNA + S-adenosyl-L-methionine = N(2)-methylguanosine(6) in tRNA + S-adenosyl-L-homocysteine + H(+). The enzyme catalyses guanosine(7) in tRNA + S-adenosyl-L-methionine = N(2)-methylguanosine(7) in tRNA + S-adenosyl-L-homocysteine + H(+). Functionally, catalytic subunit of the THUMPD3-TRM112 methyltransferase complex, that specifically mediates the S-adenosyl-L-methionine-dependent N(2)-methylation of guanosine nucleotide at position 6 (m2G6) in tRNAs. This is one of the major tRNA (guanine-N(2))-methyltransferases. Also catalyzes the S-adenosyl-L-methionine-dependent N(2)-methylation of guanosine nucleotide at position 7 of tRNA(Trp). The sequence is that of tRNA (guanine(6)-N(2))-methyltransferase THUMP3 from Bos taurus (Bovine).